A 754-amino-acid chain; its full sequence is 5-methyltetrahydropteroyltriglutamate--homocysteine methyltransferase (754 aa).

5-methyltetrahydropteroyltri-L-glutamate-binding positions include 15-18 (RELK) and lysine 114. L-homocysteine-binding positions include 430–432 (IGS) and glutamate 483. Residues 430 to 432 (IGS) and glutamate 483 each bind L-methionine. Residues 514-515 (RC) and tryptophan 560 contribute to the 5-methyltetrahydropteroyltri-L-glutamate site. Residue aspartate 598 coordinates L-homocysteine. Aspartate 598 contacts L-methionine. Glutamate 604 is a 5-methyltetrahydropteroyltri-L-glutamate binding site. Residues histidine 641, cysteine 643, and glutamate 665 each contribute to the Zn(2+) site. The active-site Proton donor is histidine 694. Cysteine 726 serves as a coordination point for Zn(2+).

The protein belongs to the vitamin-B12 independent methionine synthase family. It depends on Zn(2+) as a cofactor.

It catalyses the reaction 5-methyltetrahydropteroyltri-L-glutamate + L-homocysteine = tetrahydropteroyltri-L-glutamate + L-methionine. It functions in the pathway amino-acid biosynthesis; L-methionine biosynthesis via de novo pathway; L-methionine from L-homocysteine (MetE route): step 1/1. Its function is as follows. Catalyzes the transfer of a methyl group from 5-methyltetrahydrofolate to homocysteine resulting in methionine formation. In Campylobacter jejuni subsp. jejuni serotype O:2 (strain ATCC 700819 / NCTC 11168), this protein is 5-methyltetrahydropteroyltriglutamate--homocysteine methyltransferase.